A 1270-amino-acid polypeptide reads, in one-letter code: DNA-directed RNA polymerase subunit beta (1270 aa).

The protein belongs to the RNA polymerase beta chain family. The RNAP catalytic core consists of 2 alpha, 1 beta, 1 beta' and 1 omega subunit. When a sigma factor is associated with the core the holoenzyme is formed, which can initiate transcription.

It carries out the reaction RNA(n) + a ribonucleoside 5'-triphosphate = RNA(n+1) + diphosphate. In terms of biological role, DNA-dependent RNA polymerase catalyzes the transcription of DNA into RNA using the four ribonucleoside triphosphates as substrates. This Bacteroides fragilis (strain ATCC 25285 / DSM 2151 / CCUG 4856 / JCM 11019 / LMG 10263 / NCTC 9343 / Onslow / VPI 2553 / EN-2) protein is DNA-directed RNA polymerase subunit beta.